Reading from the N-terminus, the 130-residue chain is Small ribosomal subunit protein uS8 (130 aa).

It belongs to the universal ribosomal protein uS8 family. In terms of assembly, part of the 30S ribosomal subunit.

One of the primary rRNA binding proteins, it binds directly to 16S rRNA central domain where it helps coordinate assembly of the platform of the 30S subunit. This Methanoregula boonei (strain DSM 21154 / JCM 14090 / 6A8) protein is Small ribosomal subunit protein uS8.